Here is a 545-residue protein sequence, read N- to C-terminus: Capsular polysaccharide phosphotransferase SacB (545 aa).

The protein belongs to the stealth family.

Its function is as follows. May be the polymerase that links individual UDP-N-acetyl-D-mannosamine monomers. In serotype A the capsule is composed of repeated units of (alpha 1-6)-linked N-acetyl-D-mannosamine-1-phosphate. The sequence is that of Capsular polysaccharide phosphotransferase SacB (sacB) from Neisseria meningitidis serogroup A.